The following is a 248-amino-acid chain: Mannose-binding protein C (248 aa).

The first 20 residues, 1–20, serve as a signal peptide directing secretion; sequence MSLFPSLPLLLLSMVAASYS. Residues 42-99 form the Collagen-like domain; sequence GINGFPGKDGRDGTKGEKGEPGQGLRGLQGPPGKLGPPGNPGPSGSPGPKGQKGDPGK. The disordered stretch occupies residues 43 to 113; sequence INGFPGKDGR…DSSLAASERK (71 aa). A Hydroxyproline modification is found at proline 47. A compositionally biased stretch (basic and acidic residues) spans 49–61; the sequence is KDGRDGTKGEKGE. Hydroxyproline is present on residues proline 73, proline 79, proline 82, and proline 88. The segment covering 75–87 has biased composition (pro residues); that stretch reads KLGPPGNPGPSGS. Positions 93-102 are enriched in basic and acidic residues; the sequence is QKGDPGKSPD. A coiled-coil region spans residues 112 to 130; that stretch reads RKALQTEMARIKKWLTFSL. A C-type lectin domain is found at 134 to 245; that stretch reads VGNKFFLTNG…CSTSHLAVCE (112 aa). Intrachain disulfides connect cysteine 155-cysteine 244 and cysteine 222-cysteine 236.

In terms of assembly, oligomeric complex of 3 or more homotrimers. Interacts with MASP1 and MASP2. Interacts with MEP1A and MEP1B and may inhibit their catalytic activity. Interacts with CR1 (via Sushi 24 and Sushi 25 domains). (Microbial infection) Interacts with SARS coronavirus-2/SARS-CoV-2 Spike glycoprotein homotrimer; the interaction is calcium-dependent and modulated by Spike glycoprotein glycosylation state. In terms of tissue distribution, plasma protein produced mainly in the liver.

Its subcellular location is the secreted. In terms of biological role, calcium-dependent lectin involved in innate immune defense. Binds mannose, fucose and N-acetylglucosamine on different microorganisms and activates the lectin complement pathway. Binds to late apoptotic cells, as well as to apoptotic blebs and to necrotic cells, but not to early apoptotic cells, facilitating their uptake by macrophages. May bind DNA. Upon SARS coronavirus-2/SARS-CoV-2 infection, activates the complement lectin pathway which leads to the inhibition SARS-CoV-2 infection and a reduction of the induced inflammatory response. The sequence is that of Mannose-binding protein C from Homo sapiens (Human).